The sequence spans 317 residues: 4-hydroxy-3-methylbut-2-enyl diphosphate reductase (317 aa).

Cys12 contributes to the [4Fe-4S] cluster binding site. His41 and His74 together coordinate (2E)-4-hydroxy-3-methylbut-2-enyl diphosphate. The dimethylallyl diphosphate site is built by His41 and His74. Isopentenyl diphosphate is bound by residues His41 and His74. Cys97 provides a ligand contact to [4Fe-4S] cluster. A (2E)-4-hydroxy-3-methylbut-2-enyl diphosphate-binding site is contributed by His125. His125 provides a ligand contact to dimethylallyl diphosphate. Isopentenyl diphosphate is bound at residue His125. Glu127 (proton donor) is an active-site residue. Position 168 (Thr168) interacts with (2E)-4-hydroxy-3-methylbut-2-enyl diphosphate. Cys198 contacts [4Fe-4S] cluster. The (2E)-4-hydroxy-3-methylbut-2-enyl diphosphate site is built by Ser226, Ser227, Asn228, and Ser270. 4 residues coordinate dimethylallyl diphosphate: Ser226, Ser227, Asn228, and Ser270. The isopentenyl diphosphate site is built by Ser226, Ser227, Asn228, and Ser270.

Belongs to the IspH family. Homodimer. [4Fe-4S] cluster serves as cofactor.

It catalyses the reaction isopentenyl diphosphate + 2 oxidized [2Fe-2S]-[ferredoxin] + H2O = (2E)-4-hydroxy-3-methylbut-2-enyl diphosphate + 2 reduced [2Fe-2S]-[ferredoxin] + 2 H(+). The catalysed reaction is dimethylallyl diphosphate + 2 oxidized [2Fe-2S]-[ferredoxin] + H2O = (2E)-4-hydroxy-3-methylbut-2-enyl diphosphate + 2 reduced [2Fe-2S]-[ferredoxin] + 2 H(+). It functions in the pathway isoprenoid biosynthesis; dimethylallyl diphosphate biosynthesis; dimethylallyl diphosphate from (2E)-4-hydroxy-3-methylbutenyl diphosphate: step 1/1. The protein operates within isoprenoid biosynthesis; isopentenyl diphosphate biosynthesis via DXP pathway; isopentenyl diphosphate from 1-deoxy-D-xylulose 5-phosphate: step 6/6. In terms of biological role, catalyzes the conversion of 1-hydroxy-2-methyl-2-(E)-butenyl 4-diphosphate (HMBPP) into a mixture of isopentenyl diphosphate (IPP) and dimethylallyl diphosphate (DMAPP). Acts in the terminal step of the DOXP/MEP pathway for isoprenoid precursor biosynthesis. This Proteus mirabilis (strain HI4320) protein is 4-hydroxy-3-methylbut-2-enyl diphosphate reductase.